The primary structure comprises 308 residues: MNEEKNYELWLDNYFFKPNFWQKCLAFILLPLSVLYAFFAILNTFFRKKIVFKKPVISVGNLSFGGNGKTPLCKAIAREFDGVFIVLRGYKRKSKGLFVVKNQNEILCTLVQSGDEAMEYAFEENIKGVIVSEDRVKGIEKAFELGAKIVVLDDAFSKFHIKKFDILLESKIKPYFDFTLPSGAYRLPKFYEKRADFIALEGRDFVRYSFVKENPKAVLATAIAKPFRLYEHFIKARACYFFKDHYEFKKEELENLLKKHNCDTLMLTFKDFVKVKDFGFKCQIIELNIELKDSLREKIKTYIKEFEQ.

Position 63–70 (63–70) interacts with ATP; it reads SFGGNGKT.

The protein belongs to the LpxK family.

The enzyme catalyses a lipid A disaccharide + ATP = a lipid IVA + ADP + H(+). Its pathway is glycolipid biosynthesis; lipid IV(A) biosynthesis; lipid IV(A) from (3R)-3-hydroxytetradecanoyl-[acyl-carrier-protein] and UDP-N-acetyl-alpha-D-glucosamine: step 6/6. Transfers the gamma-phosphate of ATP to the 4'-position of a tetraacyldisaccharide 1-phosphate intermediate (termed DS-1-P) to form tetraacyldisaccharide 1,4'-bis-phosphate (lipid IVA). The protein is Tetraacyldisaccharide 4'-kinase of Campylobacter jejuni (strain RM1221).